A 389-amino-acid polypeptide reads, in one-letter code: MRRVTLFLNGSPKNGKVVAVYGTLSDLLSVASSKLGIKATSVYNGKGGLIDDIALIRDDDVLFVCEGEPFIDPQTDSKPPEGLLGFHTDWLTLNVGGRYFTTTRSTLVNKEPDSMLAHMFKDKGVWGNKQDHRGAFLIDRSPEYFEPILNYLRHGQLIVNDGINLLGVLEEARFFGIDSLIEHLEVAIKNSQPPEDHSPISRKEFVRFLLATPTKSELRCQGLNFSGADLSRLDLRYINFKMANLSRCNLAHANLCCANLERADLSGSVLDCANLQGVKMLCSNAEGASLKLCNFEDPSGLKANLEGANLKGVDMEGSQMTGINLRVATLKNAKLKNCNLRGATLAGTDLENCDLSGCDLQEANLRGSNVKGAIFEEMLTPLHMSQSVR.

The region spanning Arg-3–Gly-82 is the KHA domain. Ser-11 bears the Phosphoserine mark. Residues Asp-89–Asp-161 form the BTB domain. Pentapeptide repeat domains follow at residues Asn-224 to Cys-256, Ala-258 to Asp-297, and Cys-338 to Glu-376.

In terms of assembly, forms pentamers. Component of a complex composed of 5 subunits of KCTD9 and 5 CUL3.

It functions in the pathway protein modification; protein ubiquitination. In terms of biological role, substrate-specific adapter of a BCR (BTB-CUL3-RBX1) E3 ubiquitin-protein ligase complex, which mediates the ubiquitination of target proteins, leading to their degradation by the proteasome. This Homo sapiens (Human) protein is BTB/POZ domain-containing protein KCTD9 (KCTD9).